We begin with the raw amino-acid sequence, 135 residues long: MLSPKRTRFRKQHRGRMRGISYRGNRICFGKYALQALEPAWITSRQIEAGRRAMTRNVRRGGKTWVRIFPDKPVTLRAAETRMGSGKGNPEYWVAVVKPGRILYEMGGVAENIARKAISIAASKMPIRTQFIISG.

The protein belongs to the universal ribosomal protein uL16 family. In terms of assembly, part of the 50S ribosomal subunit.

The protein resides in the plastid. It is found in the chloroplast. The polypeptide is Large ribosomal subunit protein uL16c (Oenothera argillicola (Appalachian evening primrose)).